The sequence spans 299 residues: YjeF N-terminal domain-containing protein 3 (299 aa).

Residues 74–287 (AAALERELLE…DVRRKFALRL (214 aa)) form the YjeF N-terminal domain.

Interacts with APOA1. Binds to HDL. As to expression, expressed in theca cells in ovary and in Leydig cells in testis (at protein level). Also expressed in brain and mammary gland.

In terms of biological role, may accelerate cholesterol efflux from endothelial cells to high-density lipoprotein (HDL) and thereby regulates angiogenesis. May orchestrate hematopoietic stem and progenitor cell emergence from the hemogenic endothelium, a type of specialized endothelium manifesting hematopoietic potential. YJEFN3-mediated cholesterol efflux activates endothelial SREBF2, the master transcription factor for cholesterol biosynthesis, which in turn transactivates NOTCH and promotes hematopoietic stem and progenitor cell emergence. May play a role in spermiogenesis and oogenesis. This Homo sapiens (Human) protein is YjeF N-terminal domain-containing protein 3 (YJEFN3).